The primary structure comprises 523 residues: Acetyl-CoA hydrolase (523 aa).

A CoA-binding site is contributed by 277–281; sequence GIGNI. Residue Glu302 is the 5-glutamyl coenzyme A thioester intermediate of the active site. The CoA site is built by Asn392 and Gly396.

This sequence belongs to the acetyl-CoA hydrolase/transferase family.

The protein resides in the cytoplasm. The enzyme catalyses acetyl-CoA + H2O = acetate + CoA + H(+). Functionally, presumably involved in regulating the intracellular acetyl-CoA pool for fatty acid and cholesterol synthesis and fatty acid oxidation. The sequence is that of Acetyl-CoA hydrolase (ACH1) from Kluyveromyces lactis (strain ATCC 8585 / CBS 2359 / DSM 70799 / NBRC 1267 / NRRL Y-1140 / WM37) (Yeast).